The sequence spans 126 residues: Holo-[acyl-carrier-protein] synthase (126 aa).

Residues aspartate 9 and glutamate 58 each contribute to the Mg(2+) site.

The protein belongs to the P-Pant transferase superfamily. AcpS family. Requires Mg(2+) as cofactor.

The protein localises to the cytoplasm. The enzyme catalyses apo-[ACP] + CoA = holo-[ACP] + adenosine 3',5'-bisphosphate + H(+). Its function is as follows. Transfers the 4'-phosphopantetheine moiety from coenzyme A to a Ser of acyl-carrier-protein. This Buchnera aphidicola subsp. Acyrthosiphon pisum (strain APS) (Acyrthosiphon pisum symbiotic bacterium) protein is Holo-[acyl-carrier-protein] synthase.